The sequence spans 705 residues: Glycine--tRNA ligase beta subunit (705 aa).

The protein belongs to the class-II aminoacyl-tRNA synthetase family. Tetramer of two alpha and two beta subunits.

Its subcellular location is the cytoplasm. It catalyses the reaction tRNA(Gly) + glycine + ATP = glycyl-tRNA(Gly) + AMP + diphosphate. This Persephonella marina (strain DSM 14350 / EX-H1) protein is Glycine--tRNA ligase beta subunit.